Consider the following 791-residue polypeptide: Solute carrier family 26 member 9 (791 aa).

Residues 1–70 lie on the Cytoplasmic side of the membrane; it reads MSQPRPRYVV…WLPKYKIKDY (70 aa). The chain crosses the membrane as a helical span at residues 71 to 96; sequence IIPDLLGGLSGGSIQVPQGMAFALLA. Topologically, residues 97-99 are extracellular; that stretch reads NLP. Residues 100 to 117 traverse the membrane as a helical segment; it reads AVNGLYSSFFPLLTYFFL. The Cytoplasmic segment spans residues 118–128; that stretch reads GGVHQMVPGTF. A helical membrane pass occupies residues 129 to 142; the sequence is AVISILVGNICLQL. Residues 143–171 are Extracellular-facing; it reads APESKFQVFNNATNESYVDTAAMEAERLH. The chain crosses the membrane as a helical span at residues 172-190; that stretch reads VSATLACLTAIIQMGLGFM. Residues 191-202 are Cytoplasmic-facing; the sequence is QFGFVAIYLSES. A helical transmembrane segment spans residues 203–224; it reads FIRGFMTAAGLQILISVLKYIF. Residues 225–235 are Extracellular-facing; sequence GLTIPSYTGPG. Residues 236–244 constitute an intramembrane region (helical); it reads SIVFTFIDI. The Extracellular portion of the chain corresponds to 245-254; that stretch reads CKNLPHTNIA. Residues 255 to 273 form a helical membrane-spanning segment; sequence SLIFALISGAFLVLVKELN. Topologically, residues 274–281 are cytoplasmic; that stretch reads ARYMHKIR. Residues 282–297 form a helical membrane-spanning segment; it reads FPIPTEMIVVVVATAI. Residues 298-327 are Extracellular-facing; it reads SGGCKMPKKYHMQIVGEIQRGFPTPVSPVV. A helical transmembrane segment spans residues 328–348; that stretch reads SQWKDMIGTAFSLAIVSYVIN. The Cytoplasmic segment spans residues 349–366; that stretch reads LAMGRTLANKHGYDVDSN. A helical transmembrane segment spans residues 367 to 382; the sequence is QEMIALGCSNFFGSFF. The Extracellular portion of the chain corresponds to 383–390; sequence KIHVICCA. A helical membrane pass occupies residues 391–400; the sequence is LSVTLAVDGA. At 401–404 the chain is on the cytoplasmic side; the sequence is GGKS. Residues 405–423 traverse the membrane as a helical segment; that stretch reads QVASLCVSLVVMITMLVLG. Residues 424–428 are Extracellular-facing; sequence IYLYP. The chain crosses the membrane as a helical span at residues 429-450; it reads LPKSVLGALIAVNLKNSLKQLT. Residues 451-464 lie on the Cytoplasmic side of the membrane; the sequence is DPYYLWRKSKLDCC. Residues 465–476 form a helical membrane-spanning segment; the sequence is IWVVSFLSSFFL. A topological domain (extracellular) is located at residue Ser-477. Residues 478 to 489 form a helical membrane-spanning segment; it reads LPYGVAVGVAFS. At 490-791 the chain is on the cytoplasmic side; it reads VLVVVFQTQF…MFHAETLTAL (302 aa). One can recognise an STAS domain in the interval 519-737; it reads TYNRAQDIQG…PSIHDAVLFA (219 aa). The tract at residues 602-650 is disordered; sequence FENAPPTDPNNNQTPANGTSVSYITFSPDSSSPAQSEPPASAEAPGEPS. The span at 610–626 shows a compositional bias: polar residues; the sequence is PNNNQTPANGTSVSYIT. Residues 628–650 are compositionally biased toward low complexity; the sequence is SPDSSSPAQSEPPASAEAPGEPS.

It belongs to the SLC26A/SulP transporter (TC 2.A.53) family. As to quaternary structure, homodimer. Predominantly expressed in lung at the luminal side of the bronchiolar and alveolar epithelium of lung. To a lower extent, also expressed in pancreas and prostate.

It localises to the cell membrane. The protein resides in the endomembrane system. The catalysed reaction is chloride(in) = chloride(out). It catalyses the reaction hydrogencarbonate(in) + chloride(out) = hydrogencarbonate(out) + chloride(in). Its activity is regulated as follows. Inhibited by ammonium and thiosulfate. Functionally, ion transporter that can act both as an ion channel and anion exchanger. Mainly acts as a chloride channel, which mediate uncoupled chloride anion transport in an alternate-access mechanism where a saturable binding site is alternately exposed to either one or the other side of the membrane. Also acts as a DIDS- and thiosulfate- sensitive anion exchanger the exchange of chloride for bicarbonate ions across the cell membrane. In Homo sapiens (Human), this protein is Solute carrier family 26 member 9.